A 242-amino-acid polypeptide reads, in one-letter code: Protein HTATIP2 (242 aa).

A2 is subject to N-acetylalanine. Residues 2 to 25 are required for interaction with elongation factor EEF1A1; the sequence is AETEALSKLREDFRMQNKSVFILG. 12 residues coordinate NADPH: S27, G28, E29, T30, R52, R53, L92, G93, Y143, K147, L170, and R178. The active-site Proton acceptor is the Y143. K147 is a catalytic residue.

As to quaternary structure, monomer. Forms homodimers during oxidative stress. Interacts (via N-terminus) with elongation factor EEF1A1 (via middle-region); the interaction is direct and competes with EEF1A1 binding to guanyl-nucleotide exchange factor EEF1B2, thereby inhibiting GDP for GTP exchange and reactivation of EEF1A1. Interacts with nuclear transport receptors XPO4, IPO5/RANBP5, IPO7, IPO9 and KPNB1 as well as GCN1L1/GCN1 and LRPPRC probably through their HEAT repeats. Binds NCOA5/CIA.

It localises to the cytoplasm. In terms of biological role, represses translation by preventing reactivation of elongation factor eEF1A. May also inhibit nuclear import by competing with nuclear import substrates for binding to a subset of nuclear transport receptors. Has additionally been proposed to act as a redox sensor involved in cellular oxidative stress surveillance. This is Protein HTATIP2 (HTATIP2) from Gorilla gorilla gorilla (Western lowland gorilla).